Reading from the N-terminus, the 352-residue chain is Pre-rRNA-processing protein ipi1 (352 aa).

The protein belongs to the IPI1/TEX10 family. Component of the RIX1 complex, composed of rrm-9/ipi1, rix1/ipi2 and ipi3 in a 1:2:2 stoichiometry. The complex interacts (via rix1) with mdn1 (via its hexameric AAA ATPase ring) and the pre-60S ribosome particles.

The protein resides in the nucleus. Functionally, component of the RIX1 complex required for processing of ITS2 sequences from 35S pre-rRNA. This is Pre-rRNA-processing protein ipi1 (rrm-9) from Neurospora crassa (strain ATCC 24698 / 74-OR23-1A / CBS 708.71 / DSM 1257 / FGSC 987).